We begin with the raw amino-acid sequence, 182 residues long: Large ribosomal subunit protein uL6 (182 aa).

The protein belongs to the universal ribosomal protein uL6 family. As to quaternary structure, part of the 50S ribosomal subunit.

Its function is as follows. This protein binds to the 23S rRNA, and is important in its secondary structure. It is located near the subunit interface in the base of the L7/L12 stalk, and near the tRNA binding site of the peptidyltransferase center. This chain is Large ribosomal subunit protein uL6, found in Dehalococcoides mccartyi (strain CBDB1).